The chain runs to 647 residues: Probable potassium transport system protein Kup (647 aa).

The next 13 membrane-spanning stretches (helical) occupy residues 32 to 52 (IALM…SPLY), 74 to 94 (VISM…VLFV), 124 to 144 (LLII…AIIT), 166 to 186 (FVLP…KTGT), 193 to 213 (FGPI…HQVI), 230 to 250 (FLIE…LVLT), 271 to 291 (WFFI…AMFL), 300 to 320 (PFFL…ATAA), 322 to 342 (VIAS…AILL), 361 to 381 (IYMP…VLAF), 390 to 410 (AYGI…AIVM), 418 to 438 (TILV…FLTA), and 443 to 463 (IMEG…FLMT).

It belongs to the HAK/KUP transporter (TC 2.A.72) family.

The protein localises to the cell inner membrane. It catalyses the reaction K(+)(in) + H(+)(in) = K(+)(out) + H(+)(out). Transport of potassium into the cell. Likely operates as a K(+):H(+) symporter. This Polynucleobacter asymbioticus (strain DSM 18221 / CIP 109841 / QLW-P1DMWA-1) (Polynucleobacter necessarius subsp. asymbioticus) protein is Probable potassium transport system protein Kup.